The chain runs to 274 residues: Diaminopimelate epimerase (274 aa).

Asparagine 11, glutamine 44, and asparagine 64 together coordinate substrate. Cysteine 73 (proton donor) is an active-site residue. Substrate is bound by residues 74-75, asparagine 157, asparagine 190, and 208-209; these read GN and ER. Residue cysteine 217 is the Proton acceptor of the active site. 218 to 219 provides a ligand contact to substrate; that stretch reads GS.

Belongs to the diaminopimelate epimerase family. As to quaternary structure, homodimer.

The protein localises to the cytoplasm. It carries out the reaction (2S,6S)-2,6-diaminopimelate = meso-2,6-diaminopimelate. The protein operates within amino-acid biosynthesis; L-lysine biosynthesis via DAP pathway; DL-2,6-diaminopimelate from LL-2,6-diaminopimelate: step 1/1. Catalyzes the stereoinversion of LL-2,6-diaminopimelate (L,L-DAP) to meso-diaminopimelate (meso-DAP), a precursor of L-lysine and an essential component of the bacterial peptidoglycan. This is Diaminopimelate epimerase from Escherichia coli O6:H1 (strain CFT073 / ATCC 700928 / UPEC).